A 378-amino-acid chain; its full sequence is C-type lectin domain family 17, member A (378 aa).

Residues 1-119 form a disordered region; the sequence is MHNLYSITGY…PPLPCKPRNM (119 aa). Residues 1-172 lie on the Cytoplasmic side of the membrane; the sequence is MHNLYSITGY…GCCQKRWMVY (172 aa). Composition is skewed to acidic residues over residues 17-27, 43-53, and 69-79; these read MEEEEEDDDYE. The span at 86-101 shows a compositional bias: pro residues; it reads KDLPPKPGSSAPPRPP. Residues 173–193 form a helical; Signal-anchor for type II membrane protein membrane-spanning segment; the sequence is LCLLVVTSLFLGCLGLTVTLI. At 194–378 the chain is on the extracellular side; it reads KYQELMEELR…YWICERKCSC (185 aa). 2 N-linked (GlcNAc...) asparagine glycosylation sites follow: Asn215 and Asn237. 3 disulfides stabilise this stretch: Cys254/Cys265, Cys282/Cys372, and Cys350/Cys364. The C-type lectin domain occupies 261 to 373; that stretch reads FEGKCYYFSP…CYKTTYWICE (113 aa). Asn285 is a glycosylation site (N-linked (GlcNAc...) asparagine). Ca(2+) contacts are provided by Glu341, Asn343, Glu348, Asn360, and Asp361.

In terms of assembly, oligomer; disulfide-linked. Phosphorylated on tyrosine residues. As to expression, expressed on dividing B-cells of germinal centers in various tissues, including lymph nodes, tonsils, stomach, intestine, appendix and spleen.

It localises to the membrane. Functionally, cell surface receptor which may be involved in carbohydrate-mediated communication between cells in the germinal center. Binds glycans with terminal alpha-linked mannose or fucose residues. This is C-type lectin domain family 17, member A (CLEC17A) from Homo sapiens (Human).